We begin with the raw amino-acid sequence, 208 residues long: 2-dehydro-3-deoxy-phosphogluconate aldolase (208 aa).

The active-site Proton acceptor is the Glu-41. Residues Arg-45, Thr-68, and Lys-128 each coordinate pyruvate. Lys-128 functions as the Schiff-base intermediate with substrate in the catalytic mechanism.

The protein belongs to the KHG/KDPG aldolase family. As to quaternary structure, homotrimer.

It is found in the cytoplasm. The catalysed reaction is 2-dehydro-3-deoxy-6-phospho-D-gluconate = D-glyceraldehyde 3-phosphate + pyruvate. The protein operates within carbohydrate acid metabolism; 2-dehydro-3-deoxy-D-gluconate degradation; D-glyceraldehyde 3-phosphate and pyruvate from 2-dehydro-3-deoxy-D-gluconate: step 2/2. In terms of biological role, involved in the degradation of glucose via the Entner-Doudoroff pathway. Catalyzes the reversible, stereospecific retro-aldol cleavage of 2-keto-3-deoxy-6-phosphogluconate (KDPG) to pyruvate and D-glyceraldehyde-3-phosphate. In Zymomonas mobilis subsp. mobilis (strain ATCC 31821 / ZM4 / CP4), this protein is 2-dehydro-3-deoxy-phosphogluconate aldolase.